Consider the following 1045-residue polypeptide: DNA polymerase (1045 aa).

The segment at 331 to 355 is disordered; that stretch reads IKENEESDSESDNDDEEDKKENDGA. Over residues 335 to 348 the composition is skewed to acidic residues; that stretch reads EESDSESDNDDEED.

Belongs to the DNA polymerase type-B family.

The catalysed reaction is DNA(n) + a 2'-deoxyribonucleoside 5'-triphosphate = DNA(n+1) + diphosphate. In Phaeocystis pouchetii (PpV01), this protein is DNA polymerase (dpo).